We begin with the raw amino-acid sequence, 749 residues long: Sentrin-specific protease 5 (749 aa).

A compositionally biased stretch (basic and acidic residues) spans threonine 268–asparagine 279. Disordered regions lie at residues threonine 268–valine 288 and glutamine 394–glycine 440. The protease stretch occupies residues phenylalanine 557–leucine 718. Residues histidine 640, aspartate 657, and cysteine 707 contribute to the active site.

This sequence belongs to the peptidase C48 family. In terms of assembly, interacts with CCAR2.

The protein localises to the nucleus. It is found in the nucleolus. Protease that catalyzes two essential functions in the SUMO pathway: processing of full-length SUMO3 to its mature form and deconjugation of SUMO2 and SUMO3 from targeted proteins. Has weak proteolytic activity against full-length SUMO1 or SUMO1 conjugates. Required for cell division. The chain is Sentrin-specific protease 5 (Senp5) from Mus musculus (Mouse).